We begin with the raw amino-acid sequence, 75 residues long: Putative defensin-like protein 119 (75 aa).

The signal sequence occupies residues 1–25 (MAKSTIFAIFMIVFVLGMVTKETKG). Intrachain disulfides connect C29–C73, C39–C58, C44–C67, and C48–C69.

This sequence belongs to the DEFL family.

Its subcellular location is the secreted. The polypeptide is Putative defensin-like protein 119 (LCR53) (Arabidopsis thaliana (Mouse-ear cress)).